Consider the following 238-residue polypeptide: Ribosomal RNA large subunit methyltransferase E (238 aa).

S-adenosyl-L-methionine contacts are provided by glycine 85, tryptophan 87, aspartate 113, aspartate 129, and aspartate 153. Lysine 193 (proton acceptor) is an active-site residue.

This sequence belongs to the class I-like SAM-binding methyltransferase superfamily. RNA methyltransferase RlmE family.

It is found in the cytoplasm. It carries out the reaction uridine(2552) in 23S rRNA + S-adenosyl-L-methionine = 2'-O-methyluridine(2552) in 23S rRNA + S-adenosyl-L-homocysteine + H(+). Specifically methylates the uridine in position 2552 of 23S rRNA at the 2'-O position of the ribose in the fully assembled 50S ribosomal subunit. This chain is Ribosomal RNA large subunit methyltransferase E, found in Ruegeria sp. (strain TM1040) (Silicibacter sp.).